The chain runs to 166 residues: Phospholipase A2 inhibitor clone 04 (166 aa).

A signal peptide spans 1–19 (MRLILLSSLLLLGIFLANG). One can recognise a C-type lectin domain in the interval 46–161 (LKDAFLTVHR…CDDNRLVVCE (116 aa)). Cystine bridges form between Cys-83–Cys-160 and Cys-138–Cys-152. N-linked (GlcNAc...) asparagine glycosylation occurs at Asn-122.

Belongs to the alpha-type phospholipase A2 inhibitor family. As to quaternary structure, homotrimer; non-covalently linked. In terms of tissue distribution, expressed by the liver.

The protein resides in the secreted. Its function is as follows. This phospholipase A2 inhibitor binds directly phospholipase A2 in the presence or absence of calcium. This Bothrops moojeni (Lance-headed viper) protein is Phospholipase A2 inhibitor clone 04.